A 153-amino-acid chain; its full sequence is Putative nuclear shuttle protein (153 aa).

This sequence belongs to the nanoviridae nuclear shuttle protein family.

It localises to the host nucleus. The protein resides in the host cytoplasm. In terms of biological role, putative nuclear shuttle protein. The sequence is that of Putative nuclear shuttle protein (DNA-N) from Cicer arietinum (Chickpea).